Here is a 79-residue protein sequence, read N- to C-terminus: ESX secretion system protein YukD (79 aa).

It belongs to the EsaB family.

Required for YukE secretion. Probable component or regulator of the ESX/ESAT-6-like secretion system (BsEss). The chain is ESX secretion system protein YukD (yukD) from Bacillus subtilis (strain 168).